A 214-amino-acid polypeptide reads, in one-letter code: Holliday junction branch migration complex subunit RuvA (214 aa).

The tract at residues 1-63 (MISFLRGTVA…EDSLTLFGFS (63 aa)) is domain I. Residues 64-142 (SDDEREVFDV…PHGTGAAAAP (79 aa)) are domain II. The flexible linker stretch occupies residues 143 to 153 (AAAASAPWKPQ). Residues 153-214 (QVVAAMTSLG…RAGNRVGSRG (62 aa)) are domain III.

Belongs to the RuvA family. In terms of assembly, homotetramer. Forms an RuvA(8)-RuvB(12)-Holliday junction (HJ) complex. HJ DNA is sandwiched between 2 RuvA tetramers; dsDNA enters through RuvA and exits via RuvB. An RuvB hexamer assembles on each DNA strand where it exits the tetramer. Each RuvB hexamer is contacted by two RuvA subunits (via domain III) on 2 adjacent RuvB subunits; this complex drives branch migration. In the full resolvosome a probable DNA-RuvA(4)-RuvB(12)-RuvC(2) complex forms which resolves the HJ.

The protein resides in the cytoplasm. The RuvA-RuvB-RuvC complex processes Holliday junction (HJ) DNA during genetic recombination and DNA repair, while the RuvA-RuvB complex plays an important role in the rescue of blocked DNA replication forks via replication fork reversal (RFR). RuvA specifically binds to HJ cruciform DNA, conferring on it an open structure. The RuvB hexamer acts as an ATP-dependent pump, pulling dsDNA into and through the RuvAB complex. HJ branch migration allows RuvC to scan DNA until it finds its consensus sequence, where it cleaves and resolves the cruciform DNA. This Arthrobacter sp. (strain FB24) protein is Holliday junction branch migration complex subunit RuvA.